The following is a 360-amino-acid chain: DNA replication and repair protein RecF (360 aa).

Residue 30–37 (GQNGSGKT) participates in ATP binding.

It belongs to the RecF family.

It localises to the cytoplasm. In terms of biological role, the RecF protein is involved in DNA metabolism; it is required for DNA replication and normal SOS inducibility. RecF binds preferentially to single-stranded, linear DNA. It also seems to bind ATP. This Shewanella oneidensis (strain ATCC 700550 / JCM 31522 / CIP 106686 / LMG 19005 / NCIMB 14063 / MR-1) protein is DNA replication and repair protein RecF.